We begin with the raw amino-acid sequence, 75 residues long: Kappa-thalatoxin-Tas2a (75 aa).

The first 22 residues, 1–22 (MKFQMIAAVLLIAFCLSVVVTA), serve as a signal peptide directing secretion. Residues 23–40 (RMELQDDEEMKNGSFQKR) constitute a propeptide that is removed on maturation. The region spanning 43–75 (CIDTIPKSRCTAFQCKHSMKYRLSFCRKTCGTC) is the ShKT domain. 3 disulfides stabilise this stretch: Cys-43–Cys-75, Cys-52–Cys-68, and Cys-57–Cys-72.

The protein belongs to the sea anemone type 1 potassium channel toxin family. Type 1a subfamily.

The protein localises to the secreted. It is found in the nematocyst. Its function is as follows. Inhibits voltage-gated potassium channels (Kv) with higher potency for Kv1.1/KCNA1 and Kv1.3/KCNA3 (IC(50)=3.4 nM). In Thalassianthus aster (Fuzzy-tipped anemone), this protein is Kappa-thalatoxin-Tas2a.